A 208-amino-acid chain; its full sequence is Type 4 adapter protein LvgA (208 aa).

The disordered stretch occupies residues 184–208 (GYGYPPESPRENYKHPVSSATTARK).

As to quaternary structure, the T4BSS is a complex nanomachine composed of several subcomplexes. This subunit is part of the Type IV Coupling Complex (T4CC), a subcomplex composed of the DotLMNYZ core and the IcmSW-LvgA adapter subunits, linked by the C-terminal tail of DotL.

It localises to the cytoplasm. Functionally, component of the Dot/Icm type IVB secretion system (T4BSS), which is used to inject bacterial effector proteins into eukaryotic host cells. Part of a subcomplex which recruits effector proteins and delivers them to the core transmembrane subcomplex. Is a critical subunit for binding a subset of effector proteins. Recognizes more than one type of binding motif. May be a critical factor that confers host specificity. Necessary for full virulence of the bacterium in guinea pigs and presumably humans. The chain is Type 4 adapter protein LvgA from Legionella pneumophila.